Consider the following 208-residue polypeptide: Probable GTP-binding protein EngB (208 aa).

The EngB-type G domain occupies 23–205; that stretch reads LTSEMVILGR…RQTLLKYLLT (183 aa). Residues 31–38, 57–61, 84–87, 154–157, and 182–184 each bind GTP; these read GRSNVGKS, GKTRL, DLPG, TKFD, and FNA. 2 residues coordinate Mg(2+): serine 38 and threonine 59.

It belongs to the TRAFAC class TrmE-Era-EngA-EngB-Septin-like GTPase superfamily. EngB GTPase family. Requires Mg(2+) as cofactor.

In terms of biological role, necessary for normal cell division and for the maintenance of normal septation. The polypeptide is Probable GTP-binding protein EngB (Helicobacter pylori (strain P12)).